The sequence spans 339 residues: MPSPTNPAKVETPFTTAALGNGVDFWKAYVENRPHPSDSFFELISEYHHSHGDSAAQSAIAHDVGTGPGNIAEKLLRHFDHVVGSDVNEQALAAAPALLPADSIKRMTFVKSSAEDLASANIPESVGKGQTDLILVSECIPLLDISKAFAAFRALLRPGGTLAIYFYSRPIFTGDNEAELNQLYDRIATRVCQFLLPFKGTPGFPIHYRAAEAMSSGLDSIPFDPEAWQDVVRYKWNADVPLTFNSKEGYDFEVEPVDRRDHSTEITKEITDRDFWAEEWDIGRVASFLDSVFPNYRNKAGDKFEEVQSLFTELETALGGPKATRKVSFPVVLLLATRK.

Belongs to the methyltransferase superfamily.

It functions in the pathway secondary metabolite biosynthesis. In terms of biological role, methyltransferase; part of the gene cluster that mediates the biosynthesis of pestheic acid, a diphenyl ether which is a biosynthetic precursor of the unique chloropupukeananes. The biosynthesis initiates from condensation of acetate and malonate units catalyzed by the non-reducing PKS ptaA. As the ptaA protein is TE/CLC domain-deficient, hydrolysis and Claisen cyclization of the polyketide could be catalyzed by ptaB containing a beta-lactamase domain. The ptaB protein might hydrolyze the thioester bond between the ACP of ptaA and the intermediate to release atrochrysone carboxylic acid, which is spontaneously dehydrated to form endocrocin anthrone. Endocrocin anthrone is then converted to endocrocin, catalyzed by the anthrone oxygenase ptaC. Spontaneous decarboxylation of endocrocin occurs to generate emodin. An O-methyltransferase (ptaH or ptaI) could methylate emodin to form physcion. PtaJ could then catalyze the oxidative cleavage of physcion, and rotation of the intermediate could then afford desmethylisosulochrin. PtaF, a putative NADH-dependent oxidoreductase, might also participate in the oxidative cleavage step. Desmethylisosulochrin is then transformed by another O-methyltransferase (ptaH or ptaI) to form isosulochrin. Chlorination of isosulochrin by ptaM in the cyclohexadienone B ring then produces chloroisosulochrin. PtaE is responsible for the oxidative coupling reactions of both benzophenones isosulouchrin and chloroisosulochrin to RES-1214-1 and pestheic acid respectively, regardless of chlorination. This Pestalotiopsis fici (strain W106-1 / CGMCC3.15140) protein is Methyltransferase ptaI.